The primary structure comprises 266 residues: Tryptophan synthase alpha chain (266 aa).

Residues glutamate 51 and aspartate 62 each act as proton acceptor in the active site.

This sequence belongs to the TrpA family. In terms of assembly, tetramer of two alpha and two beta chains.

The catalysed reaction is (1S,2R)-1-C-(indol-3-yl)glycerol 3-phosphate + L-serine = D-glyceraldehyde 3-phosphate + L-tryptophan + H2O. The protein operates within amino-acid biosynthesis; L-tryptophan biosynthesis; L-tryptophan from chorismate: step 5/5. Its function is as follows. The alpha subunit is responsible for the aldol cleavage of indoleglycerol phosphate to indole and glyceraldehyde 3-phosphate. The polypeptide is Tryptophan synthase alpha chain (Prochlorococcus marinus (strain NATL1A)).